Consider the following 272-residue polypeptide: Sulfur carrier protein FdhD (272 aa).

C114 serves as the catalytic Cysteine persulfide intermediate.

The protein belongs to the FdhD family.

The protein resides in the cytoplasm. Required for formate dehydrogenase (FDH) activity. Acts as a sulfur carrier protein that transfers sulfur from IscS to the molybdenum cofactor prior to its insertion into FDH. The polypeptide is Sulfur carrier protein FdhD (Mycolicibacterium paratuberculosis (strain ATCC BAA-968 / K-10) (Mycobacterium paratuberculosis)).